The primary structure comprises 55 residues: Sporulation killing factor (55 aa).

Residues 1-29 (MKRNQKEWESVSKKGLMKPGGTSIVKAAG) constitute a propeptide that is removed on maturation. Cysteine 30 and cysteine 45 are disulfide-bonded. Positions 30-55 (CMGCWASKSIAMTRVCALPHPAMRAI) form a cross-link, cyclopeptide (Cys-Ile). The 2-(S-cysteinyl)-methionine (Cys-Met) cross-link spans 33–41 (CWASKSIAM).

This is a cyclic peptide. The first step in SKF maturation is probably thioether bond formation.

It localises to the secreted. Functionally, produces a 26-residue extracellular sporulation killing factor (SKF) that induces the lysis of other B.subtilis cells that have not entered the sporulation pathway, providing a source of nutrients to support sporulation, and at the same time delaying commitment to the energetically expensive and irreversible onset of sporulation. Can also inhibit growth of other bacteria at high concentrations. Addition of SKF to solid cultures induces killing, but it is much less effective than SDP (AC O34344). Has a role in protecting the secreted lipase LipA against proteolysis, either by modulating its folding or by acting as a protease inhibitor. The polypeptide is Sporulation killing factor (Bacillus subtilis (strain 168)).